A 41-amino-acid chain; its full sequence is MTITPSLKGFFIGLLSGAVVLGLTFAVLIAISQIDKVQRSL.

The Lumenal portion of the chain corresponds to 2–6 (TITPS). Residues 7 to 29 (LKGFFIGLLSGAVVLGLTFAVLI) form a helical membrane-spanning segment. Residues 30–41 (AISQIDKVQRSL) are Cytoplasmic-facing.

This sequence belongs to the PsbX family. Type 1 subfamily. PSII is composed of 1 copy each of membrane proteins PsbA, PsbB, PsbC, PsbD, PsbE, PsbF, PsbH, PsbI, PsbJ, PsbK, PsbL, PsbM, PsbT, PsbX, PsbY, PsbZ, Psb30/Ycf12, peripheral proteins PsbO, CyanoQ (PsbQ), PsbU, PsbV and a large number of cofactors. It forms dimeric complexes. Part of a photosystem II (PSII) assembly intermediate complex PSII-I; crystallized from a strain deleted of psbJ, it forms monomeric PSII before addition of the oxygen evolving complex. PSII-I includes 3 assembly factors not found in mature PSII (Psb27, Psb28 and Psb34). The cofactor is PSII binds multiple chlorophylls, carotenoids and specific lipids..

It localises to the cellular thylakoid membrane. In terms of biological role, involved in the binding and/or turnover of quinones at the Q(B) site of photosystem II (PSII). PSII is a light-driven water plastoquinone oxidoreductase, using light energy to abstract electrons from H(2)O, generating a proton gradient subsequently used for ATP formation. The sequence is that of Photosystem II reaction center protein X from Thermosynechococcus vestitus (strain NIES-2133 / IAM M-273 / BP-1).